A 478-amino-acid chain; its full sequence is Sedoheptulokinase (478 aa).

This sequence belongs to the FGGY kinase family. Strongly expressed in liver, kidney and pancreas. Expressed at lower levels in placenta and heart. Very weakly expressed in lung and brain.

It localises to the cytoplasm. It carries out the reaction sedoheptulose + ATP = D-sedoheptulose 7-phosphate + ADP + H(+). Acts as a modulator of macrophage activation through control of glucose metabolism. The sequence is that of Sedoheptulokinase from Homo sapiens (Human).